A 270-amino-acid polypeptide reads, in one-letter code: Formamidopyrimidine-DNA glycosylase (270 aa).

Catalysis depends on Pro2, which acts as the Schiff-base intermediate with DNA. Glu3 functions as the Proton donor in the catalytic mechanism. Lys58 serves as the catalytic Proton donor; for beta-elimination activity. DNA is bound by residues His91, Arg110, and Arg151. An FPG-type zinc finger spans residues 236–270 (FVYGRGGEFCKVCGSTLREIRLGQRASVYCPRCQR). Arg260 serves as the catalytic Proton donor; for delta-elimination activity.

It belongs to the FPG family. Monomer. It depends on Zn(2+) as a cofactor.

It carries out the reaction Hydrolysis of DNA containing ring-opened 7-methylguanine residues, releasing 2,6-diamino-4-hydroxy-5-(N-methyl)formamidopyrimidine.. It catalyses the reaction 2'-deoxyribonucleotide-(2'-deoxyribose 5'-phosphate)-2'-deoxyribonucleotide-DNA = a 3'-end 2'-deoxyribonucleotide-(2,3-dehydro-2,3-deoxyribose 5'-phosphate)-DNA + a 5'-end 5'-phospho-2'-deoxyribonucleoside-DNA + H(+). In terms of biological role, involved in base excision repair of DNA damaged by oxidation or by mutagenic agents. Acts as a DNA glycosylase that recognizes and removes damaged bases. Has a preference for oxidized purines, such as 7,8-dihydro-8-oxoguanine (8-oxoG). Has AP (apurinic/apyrimidinic) lyase activity and introduces nicks in the DNA strand. Cleaves the DNA backbone by beta-delta elimination to generate a single-strand break at the site of the removed base with both 3'- and 5'-phosphates. The polypeptide is Formamidopyrimidine-DNA glycosylase (Pseudomonas paraeruginosa (strain DSM 24068 / PA7) (Pseudomonas aeruginosa (strain PA7))).